The primary structure comprises 518 residues: D-aminopeptidase (518 aa).

The active-site Nucleophile is the serine 62. The active-site Proton donor/acceptor is the lysine 65. The tract at residues 373–392 (FGTGPEKMDISGENEAQSSM) is disordered. Positions 477 to 487 (QRSMDAPSPGE) are important for specificity. Aspartate 481 is a substrate binding site.

The protein belongs to the peptidase S12 family. As to quaternary structure, homodimer.

The enzyme catalyses Release of an N-terminal D-amino acid from a peptide, Xaa-|-Yaa-, in which Xaa is preferably D-Ala, D-Ser or D-Thr. D-amino acid amides and methyl esters also are hydrolyzed, as is glycine amide.. Inhibited by beta-lactam compounds such as 6-aminopenicillic acid, 7-aminocephalosporanic acid, benzylpenicillin and ampicillin. Inhibited by p-chloromercuribenzoate. In terms of biological role, hydrolyzes N-terminal residues in D-amino acid-containing peptides. The polypeptide is D-aminopeptidase (Brucella melitensis biotype 2 (strain ATCC 23457)).